The following is a 459-amino-acid chain: Exodeoxyribonuclease 7 large subunit (459 aa).

It belongs to the XseA family. As to quaternary structure, heterooligomer composed of large and small subunits.

The protein resides in the cytoplasm. It carries out the reaction Exonucleolytic cleavage in either 5'- to 3'- or 3'- to 5'-direction to yield nucleoside 5'-phosphates.. Functionally, bidirectionally degrades single-stranded DNA into large acid-insoluble oligonucleotides, which are then degraded further into small acid-soluble oligonucleotides. In Pseudomonas entomophila (strain L48), this protein is Exodeoxyribonuclease 7 large subunit.